The chain runs to 241 residues: Uridylate kinase (241 aa).

Residues 15–18 (KLSG), G58, and R62 contribute to the ATP site. UMP-binding positions include D77 and 138–145 (TGNPYFTT). The ATP site is built by T165, Y171, and D174.

This sequence belongs to the UMP kinase family. In terms of assembly, homohexamer.

It localises to the cytoplasm. It carries out the reaction UMP + ATP = UDP + ADP. It functions in the pathway pyrimidine metabolism; CTP biosynthesis via de novo pathway; UDP from UMP (UMPK route): step 1/1. Inhibited by UTP. Functionally, catalyzes the reversible phosphorylation of UMP to UDP. The sequence is that of Uridylate kinase from Desulfotalea psychrophila (strain LSv54 / DSM 12343).